A 120-amino-acid polypeptide reads, in one-letter code: uncharacterized protein (120 aa).

2 helical membrane passes run 26–46 and 57–77; these read PSTSLTIMLSVIAIRILPAGM and LLFASFLLLSSFHYPITLTLV.

It is found in the membrane. This is an uncharacterized protein from Saccharomyces cerevisiae (strain ATCC 204508 / S288c) (Baker's yeast).